A 658-amino-acid chain; its full sequence is Probable Xaa-Pro aminopeptidase P (658 aa).

Mn(2+)-binding residues include aspartate 449, aspartate 460, glutamate 558, and glutamate 572.

It belongs to the peptidase M24B family. Mn(2+) serves as cofactor.

The catalysed reaction is Release of any N-terminal amino acid, including proline, that is linked to proline, even from a dipeptide or tripeptide.. In terms of biological role, catalyzes the removal of a penultimate prolyl residue from the N-termini of peptides. This Aspergillus clavatus (strain ATCC 1007 / CBS 513.65 / DSM 816 / NCTC 3887 / NRRL 1 / QM 1276 / 107) protein is Probable Xaa-Pro aminopeptidase P (ampp).